Here is a 444-residue protein sequence, read N- to C-terminus: Multidrug resistance protein MdtA (444 aa).

Positions 1-20 (MKSQSKRTSRLFVFVGVVVA) are cleaved as a signal peptide. Polar residues predominate over residues 37–52 (NNTSGAQQSARGQDTS). Disordered stretches follow at residues 37-60 (NNTS…RNTP) and 399-444 (PRSA…AEKS). The span at 409–419 (ASAEKAAAEAE) shows a compositional bias: low complexity. Positions 435–444 (ARSTTAAEKS) are enriched in polar residues.

Belongs to the membrane fusion protein (MFP) (TC 8.A.1) family. Part of a tripartite efflux system composed of MdtA, MdtB and MdtC.

The protein localises to the cell inner membrane. This is Multidrug resistance protein MdtA from Yersinia pseudotuberculosis serotype I (strain IP32953).